We begin with the raw amino-acid sequence, 130 residues long: Large ribosomal subunit protein bL21 (130 aa).

The segment at 110 to 130 (TAPTATEETADATPDTETAAE) is disordered.

Belongs to the bacterial ribosomal protein bL21 family. As to quaternary structure, part of the 50S ribosomal subunit. Contacts protein L20.

This protein binds to 23S rRNA in the presence of protein L20. The polypeptide is Large ribosomal subunit protein bL21 (Nostoc sp. (strain PCC 7120 / SAG 25.82 / UTEX 2576)).